Here is a 416-residue protein sequence, read N- to C-terminus: Glutamyl-tRNA reductase (416 aa).

Substrate-binding positions include 51–54 (TCNR), Ser110, 115–117 (EPQ), and Gln121. Cys52 (nucleophile) is an active-site residue. 190–195 (GAGQTG) serves as a coordination point for NADP(+).

The protein belongs to the glutamyl-tRNA reductase family. In terms of assembly, homodimer.

The enzyme catalyses (S)-4-amino-5-oxopentanoate + tRNA(Glu) + NADP(+) = L-glutamyl-tRNA(Glu) + NADPH + H(+). Its pathway is porphyrin-containing compound metabolism; protoporphyrin-IX biosynthesis; 5-aminolevulinate from L-glutamyl-tRNA(Glu): step 1/2. In terms of biological role, catalyzes the NADPH-dependent reduction of glutamyl-tRNA(Glu) to glutamate 1-semialdehyde (GSA). This is Glutamyl-tRNA reductase from Francisella tularensis subsp. holarctica (strain OSU18).